A 175-amino-acid chain; its full sequence is uncharacterized protein (175 aa).

Disordered regions lie at residues 68-111 (NKSN…DDDQ) and 154-175 (PERA…KLTT). Positions 95–106 (EEQPMMPYQQPP) are enriched in low complexity.

It belongs to the asfivirus H171R family.

Its subcellular location is the virion. This is an uncharacterized protein from African swine fever virus (isolate Pig/Kenya/KEN-50/1950) (ASFV).